The following is a 179-amino-acid chain: MGETVVHGTTVLAIKKDGKVVMAGDGQVTMGDTVVKHQAKKVRKMYHDRILTGFSGSTADAFTLFERLEGKLEQYNGNLKRAAVELAKDWRMDRALRRLEALLVAADRNDCFILSGTGDVIEPDDGLAAVGSGAPYALAAARALIRHTGMSIREIAEEAMNIAASICIYTNREFTFEEL.

Residue Thr9 is part of the active site. Na(+) contacts are provided by Ala164, Cys167, and Thr170.

The protein belongs to the peptidase T1B family. HslV subfamily. As to quaternary structure, a double ring-shaped homohexamer of HslV is capped on each side by a ring-shaped HslU homohexamer. The assembly of the HslU/HslV complex is dependent on binding of ATP.

The protein localises to the cytoplasm. The enzyme catalyses ATP-dependent cleavage of peptide bonds with broad specificity.. With respect to regulation, allosterically activated by HslU binding. Protease subunit of a proteasome-like degradation complex believed to be a general protein degrading machinery. The sequence is that of ATP-dependent protease subunit HslV from Syntrophobacter fumaroxidans (strain DSM 10017 / MPOB).